A 678-amino-acid polypeptide reads, in one-letter code: Translation factor GUF1 homolog, chloroplastic (678 aa).

The transit peptide at 1–43 (MASILLSLNTHTLLPLHTRTRTTKTTLKILRFSHKLPPSSPFY) directs the protein to the chloroplast. The 182-residue stretch at 81–262 (KNIRNFCIIA…AIVERVPPPR (182 aa)) folds into the tr-type G domain. GTP is bound by residues 90–97 (AHIDHGKS), 155–159 (DTPGH), and 209–212 (NKID).

Belongs to the TRAFAC class translation factor GTPase superfamily. Classic translation factor GTPase family. LepA subfamily.

The protein localises to the plastid. Its subcellular location is the chloroplast. It catalyses the reaction GTP + H2O = GDP + phosphate + H(+). Promotes chloroplast protein synthesis. May act as a fidelity factor of the translation reaction, by catalyzing a one-codon backward translocation of tRNAs on improperly translocated ribosomes. This is Translation factor GUF1 homolog, chloroplastic from Populus trichocarpa (Western balsam poplar).